A 291-amino-acid chain; its full sequence is Protein SpdB (291 aa).

A run of 3 helical transmembrane segments spans residues 24–44 (VVVIVMWLGEAMPWAVALVVG), 71–91 (ITGVGWGFGAVATGVLVAHAL), and 99–119 (WLAVAWLPLAAKALWLVHGLW).

It localises to the cell membrane. Functionally, involved in plasmid transfer. The sequence is that of Protein SpdB (spdB) from Streptomyces lividans.